The chain runs to 225 residues: Orotate phosphoribosyltransferase (225 aa).

Lys31 is a binding site for 5-phospho-alpha-D-ribose 1-diphosphate. 39 to 40 (FF) serves as a coordination point for orotate. 5-phospho-alpha-D-ribose 1-diphosphate-binding positions include 78–79 (YK), Arg105, Lys106, Lys109, His111, and 130–138 (DDVLTSGKA). 2 residues coordinate orotate: Thr134 and Arg163.

The protein belongs to the purine/pyrimidine phosphoribosyltransferase family. PyrE subfamily. In terms of assembly, homodimer.

It carries out the reaction orotidine 5'-phosphate + diphosphate = orotate + 5-phospho-alpha-D-ribose 1-diphosphate. Its pathway is pyrimidine metabolism; UMP biosynthesis via de novo pathway; UMP from orotate: step 1/2. In terms of biological role, catalyzes the transfer of a ribosyl phosphate group from 5-phosphoribose 1-diphosphate to orotate, leading to the formation of orotidine monophosphate (OMP). This chain is Orotate phosphoribosyltransferase (URA5), found in Cryptococcus neoformans var. grubii serotype A (strain H99 / ATCC 208821 / CBS 10515 / FGSC 9487) (Filobasidiella neoformans var. grubii).